The sequence spans 254 residues: Pyrroloquinoline-quinone synthase (254 aa).

It belongs to the PqqC family.

It carries out the reaction 6-(2-amino-2-carboxyethyl)-7,8-dioxo-1,2,3,4,7,8-hexahydroquinoline-2,4-dicarboxylate + 3 O2 = pyrroloquinoline quinone + 2 H2O2 + 2 H2O + H(+). The protein operates within cofactor biosynthesis; pyrroloquinoline quinone biosynthesis. Its function is as follows. Ring cyclization and eight-electron oxidation of 3a-(2-amino-2-carboxyethyl)-4,5-dioxo-4,5,6,7,8,9-hexahydroquinoline-7,9-dicarboxylic-acid to PQQ. This chain is Pyrroloquinoline-quinone synthase, found in Rhodopseudomonas palustris (strain TIE-1).